Reading from the N-terminus, the 675-residue chain is Pescadillo homolog (675 aa).

Residues 309–331 are disordered; it reads AGLDEAKEEPAAETTEESSETID. The 120-residue stretch at 352–471 folds into the BRCT domain; that stretch reads EAGSLFAPFT…RLVRPDLYAP (120 aa). The disordered stretch occupies residues 475-675; that stretch reads LPPHLSPWVK…RRKLEKGAAK (201 aa). The span at 498–518 shows a compositional bias: acidic residues; it reads EQEEEGEAELDEDSDEEMEEA. Residues 519–530 show a composition bias toward basic and acidic residues; sequence TSDKKAEAKADV. Acidic residues-rich tracts occupy residues 532–541 and 549–580; these read SESEDEDESV and GTDDDESESEDEEEDFDGFEEEAASESEDEEE. Residues 551-675 adopt a coiled-coil conformation; that stretch reads DDDESESEDE…RRKLEKGAAK (125 aa). A compositionally biased stretch (basic and acidic residues) spans 581-591; sequence AARTQHQKELE. The span at 611-623 shows a compositional bias: basic residues; it reads KKASQAKKIAAKK. Residues 624–634 show a composition bias toward basic and acidic residues; that stretch reads RKEEEELERQK.

This sequence belongs to the pescadillo family. Component of the NOP7 complex, composed of erb1, nop7 and ytm1. The complex is held together by erb1, which interacts with nop7 via its N-terminal domain and with ytm1 via a high-affinity interaction between the seven-bladed beta-propeller domains of the 2 proteins. The NOP7 complex associates with the 66S pre-ribosome.

Its subcellular location is the nucleus. The protein resides in the nucleolus. It is found in the nucleoplasm. Component of the NOP7 complex, which is required for maturation of the 25S and 5.8S ribosomal RNAs and formation of the 60S ribosome. The chain is Pescadillo homolog (nop7) from Aspergillus fumigatus (strain CBS 144.89 / FGSC A1163 / CEA10) (Neosartorya fumigata).